The chain runs to 382 residues: Chaperone protein DnaJ (382 aa).

A J domain is found at 5–70; that stretch reads DYYEVLGLQK…QKRAAYDQYG (66 aa). The CR-type zinc-finger motif lies at 134–212; that stretch reads GTTKDIQINT…CHGEGRVHKK (79 aa). Positions 147, 150, 164, 167, 186, 189, 200, and 203 each coordinate Zn(2+). 4 CXXCXGXG motif repeats span residues 147–154, 164–171, 186–193, and 200–207; these read CDSCGGSG, CPHCHGSG, CPTCHGSG, and CRNCHGEG.

It belongs to the DnaJ family. In terms of assembly, homodimer. It depends on Zn(2+) as a cofactor.

The protein resides in the cytoplasm. Its function is as follows. Participates actively in the response to hyperosmotic and heat shock by preventing the aggregation of stress-denatured proteins and by disaggregating proteins, also in an autonomous, DnaK-independent fashion. Unfolded proteins bind initially to DnaJ; upon interaction with the DnaJ-bound protein, DnaK hydrolyzes its bound ATP, resulting in the formation of a stable complex. GrpE releases ADP from DnaK; ATP binding to DnaK triggers the release of the substrate protein, thus completing the reaction cycle. Several rounds of ATP-dependent interactions between DnaJ, DnaK and GrpE are required for fully efficient folding. Also involved, together with DnaK and GrpE, in the DNA replication of plasmids through activation of initiation proteins. The chain is Chaperone protein DnaJ from Haemophilus influenzae (strain ATCC 51907 / DSM 11121 / KW20 / Rd).